A 314-amino-acid polypeptide reads, in one-letter code: Olfactory receptor 52B4 (314 aa).

Residues 1-27 (MPTVNHSGTSHTVFHLLGIPGLQDQHM) are Extracellular-facing. Asparagine 5 carries an N-linked (GlcNAc...) asparagine glycan. A helical membrane pass occupies residues 28–48 (WISIPFFISYVTALLGNSLLI). The Cytoplasmic portion of the chain corresponds to 49 to 56 (FIILTKRS). Residues 57–77 (LHEPMYLFLCMLAGADIVLST) form a helical membrane-spanning segment. Topologically, residues 78-101 (CTIPQALAIFWFRAGDISLDRCIT) are extracellular. An intrachain disulfide couples cysteine 99 to cysteine 191. Residues 102–122 (QLFFIHSTFISESGILLVMAF) traverse the membrane as a helical segment. Residues 123–141 (DHYIAICYPLRYTTILTNA) lie on the Cytoplasmic side of the membrane. Residues 142–162 (LIKKICVTVSLRSYGTIFPII) form a helical membrane-spanning segment. The Extracellular portion of the chain corresponds to 163–198 (FLLKRLTFCQNNIIPHTFCEHIGLAKYACNDIRINI). The chain crosses the membrane as a helical span at residues 199-219 (WYGFSILMSTVVLDVVLIFIS). At 220–239 (YMLILHAVFHMPSPDACHKA) the chain is on the cytoplasmic side. A helical transmembrane segment spans residues 240–260 (LNTFGSHVCIIILFYGSGIFT). Topologically, residues 261–275 (ILTQRFGRHIPPCIH) are extracellular. A helical membrane pass occupies residues 276 to 296 (IPLANVCILAPPMLNPIIYGI). Topologically, residues 297 to 314 (KTKQIQEQVVQFLFIKQK) are cytoplasmic.

It belongs to the G-protein coupled receptor 1 family.

It is found in the cell membrane. Odorant receptor. The sequence is that of Olfactory receptor 52B4 (OR52B4) from Homo sapiens (Human).